Reading from the N-terminus, the 806-residue chain is MHALRALDTLCENMEYNFRALEEKWAPIWERDRLFEVDENDSETPRKYVLDMFSYPSGDLHMGHAETYAYGDFIARYWRHRGYNVLHPVGWDSFGLPAENAAIKHGSDPKVWTYRNIDQQARSMRLYAASFDWSRRLHTSDPEYYRWNQWLFLKLYKHGLAYRKKAWVNWDPSDRTVLANEQVLPDGTSERSGALVVKKKLTQWFLRITAYADRLLDDLSMLENNWPERVITMQRNWIGRSEGVSIEFNIPTLKRPVMVFTTRPETIFGVTYLALAFDSEVTEELASKSGVLGELLELRHNIDKTHESVRGLDLKSFAIHPLTGQSIPIFAASYILSDYAKGAVMSVPGHDTRDERFAVRYNLPIVKIMEDNRLISSGKYSGQSVTQARENITRDLCAKSLGRREISYRLRDWLISRQRYWGTPIPILYDSNGSEIPVEEDDLPVLLPDSEGIDLTPSGLSPLGGIHDWVNLHKAGSLFRRDTDTMDTFFDSSWYFLRYLNPDCDTAPFTLEKAKKWGPVDQYCGGVEHAVLHLLYARFITKFLYDIGFVDFKEPFLRLINQGMVVLNGAKMSKSKGNIVEFSKEVSQHGVDVIRFALIFSGPPEEDIDWKDVSMTGAARFLSRCIQTAKEVPKRTADLSLGDIELRKHTHSLLNDIDWLVDSYRFNVIAARLMDLLNITRKKIQTIGADNPAIREAIETIAIALDMFSPYTAEEMWEILGNKYSVSKALFPEVDTTFLEQKTTCAIVQIDGRLRGRLNVLTNITTEQLVHSARSLPAIEHALSGRSVKRVICVPPKLVNFVVEPK.

The 'HIGH' region signature appears at 54–64 (SYPSGDLHMGH). The short motif at 571-575 (KMSKS) is the 'KMSKS' region element. Lys574 contacts ATP.

The protein belongs to the class-I aminoacyl-tRNA synthetase family.

It is found in the cytoplasm. The catalysed reaction is tRNA(Leu) + L-leucine + ATP = L-leucyl-tRNA(Leu) + AMP + diphosphate. This chain is Leucine--tRNA ligase, found in Tropheryma whipplei (strain TW08/27) (Whipple's bacillus).